The following is a 307-amino-acid chain: Acyl transferase (307 aa).

Catalysis depends on charge relay system residues Ser116, Asp213, and His243.

This sequence belongs to the LuxD family.

Its pathway is lipid metabolism; fatty acid reduction for biolumincescence. Functionally, acyl transferase is part of the fatty acid reductase system required for aldehyde biosynthesis; it produces fatty acids for the luminescent reaction. The sequence is that of Acyl transferase from Aliivibrio fischeri (Vibrio fischeri).